The chain runs to 86 residues: Large ribosomal subunit protein bL27 (86 aa).

Belongs to the bacterial ribosomal protein bL27 family.

The polypeptide is Large ribosomal subunit protein bL27 (Christiangramia forsetii (strain DSM 17595 / CGMCC 1.15422 / KT0803) (Gramella forsetii)).